The following is a 269-amino-acid chain: Regulating synaptic membrane exocytosis protein 4 (269 aa).

The region spanning Pro115–Tyr233 is the C2 domain. Ser254 and Ser257 each carry phosphoserine.

As to quaternary structure, binds PPFIA3. Does not bind RAB3.

Its subcellular location is the synapse. Functionally, regulates synaptic membrane exocytosis. In Mus musculus (Mouse), this protein is Regulating synaptic membrane exocytosis protein 4 (Rims4).